A 547-amino-acid chain; its full sequence is Chaperonin GroEL 1 (547 aa).

Residues 30–33, Lys-51, 87–91, Gly-415, and Asp-496 contribute to the ATP site; these read TLGP and DGTTT.

It belongs to the chaperonin (HSP60) family. Forms a cylinder of 14 subunits composed of two heptameric rings stacked back-to-back. Interacts with the co-chaperonin GroES.

The protein resides in the cytoplasm. The catalysed reaction is ATP + H2O + a folded polypeptide = ADP + phosphate + an unfolded polypeptide.. Its function is as follows. Together with its co-chaperonin GroES, plays an essential role in assisting protein folding. The GroEL-GroES system forms a nano-cage that allows encapsulation of the non-native substrate proteins and provides a physical environment optimized to promote and accelerate protein folding. The sequence is that of Chaperonin GroEL 1 from Rhodopseudomonas palustris (strain BisB5).